A 332-amino-acid polypeptide reads, in one-letter code: DNA-directed RNA polymerase subunit alpha (332 aa).

Residues 2–234 (TVTANQVLRP…DQLSVFGDFT (233 aa)) are alpha N-terminal domain (alpha-NTD). The tract at residues 248–332 (VDPVLLRPID…AGVAQHGMLG (85 aa)) is alpha C-terminal domain (alpha-CTD).

This sequence belongs to the RNA polymerase alpha chain family. Homodimer. The RNAP catalytic core consists of 2 alpha, 1 beta, 1 beta' and 1 omega subunit. When a sigma factor is associated with the core the holoenzyme is formed, which can initiate transcription.

It carries out the reaction RNA(n) + a ribonucleoside 5'-triphosphate = RNA(n+1) + diphosphate. DNA-dependent RNA polymerase catalyzes the transcription of DNA into RNA using the four ribonucleoside triphosphates as substrates. The chain is DNA-directed RNA polymerase subunit alpha from Xanthomonas axonopodis pv. citri (strain 306).